Here is a 247-residue protein sequence, read N- to C-terminus: Triosephosphate isomerase (247 aa).

Residues N10 and K12 each contribute to the substrate site. The active-site Electrophile is the H94. E164 acts as the Proton acceptor in catalysis.

The protein belongs to the triosephosphate isomerase family. Homodimer.

The enzyme catalyses D-glyceraldehyde 3-phosphate = dihydroxyacetone phosphate. The protein operates within carbohydrate biosynthesis; gluconeogenesis. It functions in the pathway carbohydrate degradation; glycolysis; D-glyceraldehyde 3-phosphate from glycerone phosphate: step 1/1. In Drosophila melanogaster (Fruit fly), this protein is Triosephosphate isomerase (Tpi).